Reading from the N-terminus, the 233-residue chain is Transmembrane protein 182 (233 aa).

Positions 1-26 (MKLSVGIFFGGLFAALGVLLFLVAFG) are cleaved as a signal peptide. The Extracellular segment spans residues 27–117 (TDYWLLATEI…SYDSAVIYRG (91 aa)). An interaction with ITGB1 region spans residues 52-62 (TFHHEGFFWRC). Residues N88 and N105 are each glycosylated (N-linked (GlcNAc...) asparagine). Residues 118-138 (FWTVLMLLGVITIVMASFLII) traverse the membrane as a helical segment. The Cytoplasmic portion of the chain corresponds to 139–153 (CAAPFASHILYKAGG). A helical membrane pass occupies residues 154 to 174 (GFYILAGVLFSLVVVMYVIWV). Residues 175 to 203 (QAMADLENYTNMKKMDCPDFAVYVRYGWS) lie on the Extracellular side of the membrane. The chain crosses the membrane as a helical span at residues 204-224 (FMLAPIGVFFALLAGMLFLLV). At 225 to 233 (GRAIYLNSD) the chain is on the cytoplasmic side.

It belongs to the TMEM182 family. As to quaternary structure, interacts with ITGB1. Expressed in skeletal muscle and adipose tissue.

It is found in the cell membrane. In terms of biological role, negatively regulates myogenesis and skeletal muscle regeneration via its association with ITGB1. Modulates ITGB1 activation by decreasing ITGB1-LAMB1 interaction and inhibiting ITGB1-mediated intracellular signaling during myogenesis. The polypeptide is Transmembrane protein 182 (TMEM182) (Gallus gallus (Chicken)).